Consider the following 169-residue polypeptide: Crossover junction endodeoxyribonuclease RuvC (169 aa).

Active-site residues include aspartate 7, glutamate 67, and aspartate 140. Mg(2+) contacts are provided by aspartate 7, glutamate 67, and aspartate 140.

Belongs to the RuvC family. As to quaternary structure, homodimer which binds Holliday junction (HJ) DNA. The HJ becomes 2-fold symmetrical on binding to RuvC with unstacked arms; it has a different conformation from HJ DNA in complex with RuvA. In the full resolvosome a probable DNA-RuvA(4)-RuvB(12)-RuvC(2) complex forms which resolves the HJ. It depends on Mg(2+) as a cofactor.

It is found in the cytoplasm. It carries out the reaction Endonucleolytic cleavage at a junction such as a reciprocal single-stranded crossover between two homologous DNA duplexes (Holliday junction).. The RuvA-RuvB-RuvC complex processes Holliday junction (HJ) DNA during genetic recombination and DNA repair. Endonuclease that resolves HJ intermediates. Cleaves cruciform DNA by making single-stranded nicks across the HJ at symmetrical positions within the homologous arms, yielding a 5'-phosphate and a 3'-hydroxyl group; requires a central core of homology in the junction. The consensus cleavage sequence is 5'-(A/T)TT(C/G)-3'. Cleavage occurs on the 3'-side of the TT dinucleotide at the point of strand exchange. HJ branch migration catalyzed by RuvA-RuvB allows RuvC to scan DNA until it finds its consensus sequence, where it cleaves and resolves the cruciform DNA. This is Crossover junction endodeoxyribonuclease RuvC from Clostridioides difficile (strain 630) (Peptoclostridium difficile).